A 156-amino-acid polypeptide reads, in one-letter code: MLTHLDSQGRANMVDVTEKAVTEREATAEARVRMLPQTLQMIVDGEHPKGDVFAVARIAGIQAAKKTSDLIPLCHPLMLTSVKVELSAEGQDTVRIVARCKLAGQTGVEMEALTAASVAALTIYDMCKAVDKGMVIEQVRLLEKLGGKSGHYKVQA.

Substrate contacts are provided by residues 73–75 (LCH) and 110–111 (ME). Residue Asp-125 is part of the active site.

This sequence belongs to the MoaC family. Homohexamer; trimer of dimers.

It catalyses the reaction (8S)-3',8-cyclo-7,8-dihydroguanosine 5'-triphosphate = cyclic pyranopterin phosphate + diphosphate. It participates in cofactor biosynthesis; molybdopterin biosynthesis. Its function is as follows. Catalyzes the conversion of (8S)-3',8-cyclo-7,8-dihydroguanosine 5'-triphosphate to cyclic pyranopterin monophosphate (cPMP). This is Cyclic pyranopterin monophosphate synthase from Pseudomonas putida (strain GB-1).